We begin with the raw amino-acid sequence, 341 residues long: Major histocompatibility complex class I-related protein 1 (341 aa).

The N-terminal stretch at 1–22 is a signal peptide; that stretch reads MGELMAFLLPLIIVLMVKHSDS. The interval 23 to 109 is alpha-1; sequence RTHSLRYFRL…KRLQRHYNHS (87 aa). Positions 23 to 201 are antigen-binding cleft; it reads RTHSLRYFRL…EYGKDILQRT (179 aa). Over 23–302 the chain is Extracellular; it reads RTHSLRYFRL…QESETIPLVM (280 aa). Positions 29 and 31 each coordinate 8-(9H-purin-6-yl)-2-oxa-8-azabicyclo[3.3.1]nona-3,6-diene-4,6-dicarbaldehyde. 5-(2-oxoethylideneamino)-6-(D-ribitylamino)uracil contacts are provided by arginine 31, serine 46, and lysine 65. 5-(2-oxopropylideneamino)-6-(D-ribitylamino)uracil is bound by residues arginine 31, serine 46, and lysine 65. The 7-hydroxy-6-methyl-8-(1-D-ribityl)lumazine site is built by arginine 31, serine 46, and lysine 65. 8-(9H-purin-6-yl)-2-oxa-8-azabicyclo[3.3.1]nona-3,6-diene-4,6-dicarbaldehyde-binding residues include lysine 65 and histidine 80. Residue lysine 65 coordinates 2-amino-4-oxopteridine-6-carbaldehyde. Pyridoxal is bound at residue lysine 65. Asparagine 107 is a glycosylation site (N-linked (GlcNAc...) asparagine). Positions 110-201 are alpha-2; it reads GSHTYQRMIG…EYGKDILQRT (92 aa). Residue arginine 116 participates in 8-(9H-purin-6-yl)-2-oxa-8-azabicyclo[3.3.1]nona-3,6-diene-4,6-dicarbaldehyde binding. 3 residues coordinate 5-(2-oxoethylideneamino)-6-(D-ribitylamino)uracil: arginine 116, tyrosine 174, and glutamine 175. 5-(2-oxopropylideneamino)-6-(D-ribitylamino)uracil contacts are provided by arginine 116, tyrosine 174, and glutamine 175. Arginine 116, tyrosine 174, and glutamine 175 together coordinate 7-hydroxy-6-methyl-8-(1-D-ribityl)lumazine. 2 cysteine pairs are disulfide-bonded: cysteine 120–cysteine 183 and cysteine 222–cysteine 278. The tract at residues 202–293 is alpha-3; sequence EPPLVRVNRK…GVHMVLQVPQ (92 aa). In terms of domain architecture, Ig-like C1-type spans 203–299; sequence PPLVRVNRKE…QVPQESETIP (97 aa). Residues 294–302 are connecting peptide; that stretch reads ESETIPLVM. A helical transmembrane segment spans residues 303–323; it reads KAVSGSIVLVIVLAGVGVLVW. At 324–341 the chain is on the cytoplasmic side; sequence RRRPREQNGAIYLPTPDR.

The protein belongs to the MHC class I family. Heterotrimer that consists of MR1, B2M and metabolite antigen. Major classes of metabolite ligands presented by MR1 include riboflavin-related antigens, pyrimidines and ribityl lumazines, nucleobase adducts and folate derivatives. Forms reversible covalent Schiff base complexes with microbial pyrimidine-based metabolite, which serves as a molecular switch triggering complete folding, stable association with B2M and translocation of the ternary complex from endoplasmic reticulum to the plasma membrane. Alternatively, forms non-Schiff base complexes with ribityl lumazines. On antigen-presenting cells, the ternary complex interacts with TCR on MR1-restricted T cells. Interacts with TAPBP and TAPBPL chaperones in the endoplasmic reticulum. TAPBP associated or not with MHC class I peptide loading complex binds ligand-free MR1 or MR1-B2M complex, providing for stable MR1 pools ready for metabolite antigen processing. TAPBPL interacts with MR1 in a ligand-independent way; this interaction may stabilize MR1 pool and facilitate ligand loading and dissociation. Structurally, MR1-B2M heterodimer adopts a topology similar to classical MHC class I molecules, with alpha-1 and alpha-2 domains of MR1 forming the antigen-binding cleft composed of two alpha-helices resting on a floor of 7-stranded anti-parallel beta-pleated sheet. MR1-B2M heterodimer (via alpha-helices) interacts with TCR (via CDR domains). Post-translationally, N-glycosylated.

It localises to the cell membrane. It is found in the endoplasmic reticulum membrane. The protein resides in the golgi apparatus membrane. Its subcellular location is the early endosome membrane. The protein localises to the late endosome membrane. Functionally, antigen-presenting molecule specialized in displaying microbial pyrimidine-based metabolites to alpha-beta T cell receptors (TCR) on innate-type mucosal-associated invariant T (MAIT) cells. In complex with B2M preferentially presents riboflavin-derived metabolites to semi-invariant TCRs on MAIT cells, guiding immune surveillance of the microbial metabolome at mucosal epithelial barriers. Signature pyrimidine-based microbial antigens are generated via non-enzymatic condensation of metabolite intermediates of the riboflavin pathway with by-products arising from other metabolic pathways such as glycolysis. Typical potent antigenic metabolites are 5-(2-oxoethylideneamino)-6-D-ribitylaminouracil (5-OE-RU) and 5-(2-oxopropylideneamino)-6-D-ribitylaminouracil (5-OP-RU), products of condensation of 5-amino-6-D-ribityaminouracil (5-A-RU) with glyoxal or methylglyoxal by-products, respectively. May present microbial antigens to various MAIT cell subsets, providing for unique recognition of diverse microbes, including pathogens that do not synthesize riboflavin. Upon antigen recognition, elicits rapid innate-type MAIT cell activation to eliminate pathogenic microbes by directly killing infected cells. During T cell development, drives thymic selection and post-thymic terminal differentiation of MAIT cells in a process dependent on commensal microflora. Acts as an immune sensor of cancer cell metabolome. May present a tumor-specific or -associated metabolite essential for cancer cell survival to a pan-cancer TCR on a non-MAIT CD8-positive T cell clone, triggering T cell-mediated killing of a wide range of cancer cell types. May present tumor-enriched pyridoxal and pyridoxal 5'-phosphate antigens, enabling preferential recognition of cancer cells. Presents nucleobase carbonyl adducts generated during oxidative stress. Captures M3Ade, a nucleobase adduct composed of one adenine modified by a malondialdehyde trimer, for recognition by MR1-restricted T cell clones expressing a polyclonal TCR repertoire. The polypeptide is Major histocompatibility complex class I-related protein 1 (Pan troglodytes (Chimpanzee)).